The chain runs to 104 residues: Large ribosomal subunit protein bL21 (104 aa).

This sequence belongs to the bacterial ribosomal protein bL21 family. In terms of assembly, part of the 50S ribosomal subunit. Contacts protein L20.

Its function is as follows. This protein binds to 23S rRNA in the presence of protein L20. The polypeptide is Large ribosomal subunit protein bL21 (Streptococcus gordonii (strain Challis / ATCC 35105 / BCRC 15272 / CH1 / DL1 / V288)).